Consider the following 1064-residue polypeptide: Carbamoyl phosphate synthase large chain (1064 aa).

Residues 1-401 are carboxyphosphate synthetic domain; that stretch reads MPKRNDIKKI…SLLKAVRSLE (401 aa). ATP contacts are provided by R129, R169, G175, G176, E208, I210, E215, G241, V242, H243, Q284, and E298. In terms of domain architecture, ATP-grasp 1 spans 133-327; the sequence is KELCERIGEP…IAKMSAKIAI (195 aa). Mg(2+) is bound by residues Q284, E298, and N300. 3 residues coordinate Mn(2+): Q284, E298, and N300. An oligomerization domain region spans residues 402–546; sequence IGVFHNDLQE…YSTYEWENES (145 aa). The segment at 547–929 is carbamoyl phosphate synthetic domain; it reads KRSSKEKIIV…ALYKSFEAAK (383 aa). The ATP-grasp 2 domain occupies 671-861; that stretch reads EKALQDLEIP…MAQLATQMIL (191 aa). Positions 707, 746, 748, 752, 777, 778, 779, 780, 820, and 832 each coordinate ATP. Mg(2+) contacts are provided by Q820, E832, and N834. The Mn(2+) site is built by Q820, E832, and N834. The MGS-like domain maps to 930–1064; the sequence is LHMADYGSVL…QSRSFTTKNI (135 aa). Positions 930–1064 are allosteric domain; sequence LHMADYGSVL…QSRSFTTKNI (135 aa).

Belongs to the CarB family. As to quaternary structure, composed of two chains; the small (or glutamine) chain promotes the hydrolysis of glutamine to ammonia, which is used by the large (or ammonia) chain to synthesize carbamoyl phosphate. Tetramer of heterodimers (alpha,beta)4. The cofactor is Mg(2+). Mn(2+) is required as a cofactor.

It catalyses the reaction hydrogencarbonate + L-glutamine + 2 ATP + H2O = carbamoyl phosphate + L-glutamate + 2 ADP + phosphate + 2 H(+). The enzyme catalyses hydrogencarbonate + NH4(+) + 2 ATP = carbamoyl phosphate + 2 ADP + phosphate + 2 H(+). It participates in amino-acid biosynthesis; L-arginine biosynthesis; carbamoyl phosphate from bicarbonate: step 1/1. It functions in the pathway pyrimidine metabolism; UMP biosynthesis via de novo pathway; (S)-dihydroorotate from bicarbonate: step 1/3. Large subunit of the glutamine-dependent carbamoyl phosphate synthetase (CPSase). CPSase catalyzes the formation of carbamoyl phosphate from the ammonia moiety of glutamine, carbonate, and phosphate donated by ATP, constituting the first step of 2 biosynthetic pathways, one leading to arginine and/or urea and the other to pyrimidine nucleotides. The large subunit (synthetase) binds the substrates ammonia (free or transferred from glutamine from the small subunit), hydrogencarbonate and ATP and carries out an ATP-coupled ligase reaction, activating hydrogencarbonate by forming carboxy phosphate which reacts with ammonia to form carbamoyl phosphate. The chain is Carbamoyl phosphate synthase large chain from Lactococcus lactis subsp. lactis (strain IL1403) (Streptococcus lactis).